We begin with the raw amino-acid sequence, 540 residues long: Probable metabolite transport protein YFL040W (540 aa).

Residues 1-29 are Cytoplasmic-facing; that stretch reads MTAMKAIVWRLPKMPKIKITKTYEVTKIT. Residues 30–50 form a helical membrane-spanning segment; the sequence is AILTLVGFIMGLEVPSLATFL. At 51–67 the chain is on the extracellular side; the sequence is TNKTFNEYFKYPTPLQQ. N-linked (GlcNAc...) asparagine glycosylation is present at Asn52. A helical membrane pass occupies residues 68-88; that stretch reads GLLMGSTPLGGIMGCFICCIM. Topologically, residues 89–101 are cytoplasmic; the sequence is NDRFSRIYQFQSG. Residues 102 to 122 form a helical membrane-spanning segment; that stretch reads IIIWNIVTLLNFCIWDILGLL. At 123–126 the chain is on the extracellular side; sequence ICRM. Residues 127-147 traverse the membrane as a helical segment; it reads IKGMILGNFSILVASYANEVI. The Cytoplasmic segment spans residues 148–158; that stretch reads PRGKRGSTMSY. Residues 159–179 traverse the membrane as a helical segment; the sequence is IQLCLTIGILVMHYLCIALSL. The Extracellular portion of the chain corresponds to 180–187; that stretch reads WDSHFAFR. Residues 188–208 form a helical membrane-spanning segment; that stretch reads IAWCIGIIPGLLFWMASYALP. Topologically, residues 209 to 275 are cytoplasmic; that stretch reads ESYHWLVLHG…KKLPRGSFKP (67 aa). Residues 276 to 296 form a helical membrane-spanning segment; the sequence is LILGMTLQLLVQFSGINIILG. The Extracellular portion of the chain corresponds to 297 to 313; sequence YITYICEIVGLEGNVKL. Residues 314 to 334 form a helical membrane-spanning segment; sequence FTSSIPYFINMVLSLLPITFI. Residues 335–341 lie on the Cytoplasmic side of the membrane; sequence DYTSRKL. A helical membrane pass occupies residues 342–362; sequence ITLLGGFPISGLLITIGALFV. The Extracellular segment spans residues 363–385; that stretch reads KYGQDTKPIDGNRSLVWSIGENP. Asn374 carries N-linked (GlcNAc...) asparagine glycosylation. Residues 386–406 form a helical membrane-spanning segment; it reads FVGGWILTLCFLIVGIFAMSL. Residues 407–428 lie on the Cytoplasmic side of the membrane; it reads SSIPWVYTNEMLPSRVKVKGFA. Residues 429–449 traverse the membrane as a helical segment; the sequence is ICVTFGWLGNFILTFLCPVMI. Over 450–455 the chain is Extracellular; it reads ERLKGT. Residues 456-476 traverse the membrane as a helical segment; that stretch reads TFIIFGSLTFLISLSVLIWFP. Over 477 to 540 the chain is Cytoplasmic; that stretch reads ETKGMSIEDI…KLKSDEEMII (64 aa). Residues 499–540 are disordered; that stretch reads NLHGEKGIKTPDSNSNGGSTRSSQEGQLHKPIKLKSDEEMII. The segment covering 509–524 has biased composition (polar residues); sequence PDSNSNGGSTRSSQEG.

Belongs to the major facilitator superfamily. Sugar transporter (TC 2.A.1.1) family.

The protein localises to the membrane. This is Probable metabolite transport protein YFL040W from Saccharomyces cerevisiae (strain ATCC 204508 / S288c) (Baker's yeast).